The chain runs to 356 residues: Glucose-1-phosphate thymidylyltransferase (356 aa).

Asp-107 and Asp-221 together coordinate Mg(2+).

The protein belongs to the glucose-1-phosphate thymidylyltransferase family. It depends on Mg(2+) as a cofactor.

It carries out the reaction dTTP + alpha-D-glucose 1-phosphate + H(+) = dTDP-alpha-D-glucose + diphosphate. Its pathway is antibiotic biosynthesis. Involved in the biosynthesis of the two 2,6-deoxysugars, dTDP-L-oleandrose and dTDP-D-desosamine, attached to the macrolactone ring oleandolide to produce the aglycone antibiotic oleandomycin. Catalyzes the formation of dTDP-glucose from deoxythymidine triphosphate (dTTP) and glucose 1-phosphate. The sequence is that of Glucose-1-phosphate thymidylyltransferase from Streptomyces antibioticus.